Here is a 250-residue protein sequence, read N- to C-terminus: Transcriptional activator protein ExpR (250 aa).

Residues 173–238 (KSQEADLFSQ…HAIRLGVEMN (66 aa)) form the HTH luxR-type domain. The segment at residues 197–216 (YQEIALILGITTSTVKFHIG) is a DNA-binding region (H-T-H motif).

It belongs to the autoinducer-regulated transcriptional regulatory protein family.

Functionally, functions as an OHLL responsive transcriptional regulator that acts in virulence (soft rot disease) through the activation of genes for plant tissue macerating enzymes. This chain is Transcriptional activator protein ExpR (expR), found in Dickeya dadantii (strain 3937) (Erwinia chrysanthemi (strain 3937)).